We begin with the raw amino-acid sequence, 233 residues long: Large ribosomal subunit protein uL1 (233 aa).

Belongs to the universal ribosomal protein uL1 family. As to quaternary structure, part of the 50S ribosomal subunit.

Functionally, binds directly to 23S rRNA. The L1 stalk is quite mobile in the ribosome, and is involved in E site tRNA release. In terms of biological role, protein L1 is also a translational repressor protein, it controls the translation of the L11 operon by binding to its mRNA. The sequence is that of Large ribosomal subunit protein uL1 from Syntrophomonas wolfei subsp. wolfei (strain DSM 2245B / Goettingen).